A 298-amino-acid polypeptide reads, in one-letter code: Ribosomal protein L11 methyltransferase (298 aa).

Threonine 150, glycine 171, aspartate 193, and asparagine 232 together coordinate S-adenosyl-L-methionine.

The protein belongs to the methyltransferase superfamily. PrmA family.

The protein resides in the cytoplasm. It catalyses the reaction L-lysyl-[protein] + 3 S-adenosyl-L-methionine = N(6),N(6),N(6)-trimethyl-L-lysyl-[protein] + 3 S-adenosyl-L-homocysteine + 3 H(+). In terms of biological role, methylates ribosomal protein L11. This is Ribosomal protein L11 methyltransferase from Chromobacterium violaceum (strain ATCC 12472 / DSM 30191 / JCM 1249 / CCUG 213 / NBRC 12614 / NCIMB 9131 / NCTC 9757 / MK).